A 782-amino-acid chain; its full sequence is E3 ubiquitin-protein ligase SopA (782 aa).

Positions 137–171 (VSVSANNRPTVSEGRTPPVSPSLSLQATSSPSSPA) are disordered. A compositionally biased stretch (low complexity) spans 157 to 171 (PSLSLQATSSPSSPA). The Glycyl thioester intermediate role is filled by Cys753.

It belongs to the SopA E3 ligase family. Ubiquitinated in the presence of host E1 ubiquitin-activating enzyme, E2 ubiquitin-conjugating enzyme and ubiquitin.

Its subcellular location is the secreted. It is found in the host cell. It catalyses the reaction S-ubiquitinyl-[E2 ubiquitin-conjugating enzyme]-L-cysteine + [acceptor protein]-L-lysine = [E2 ubiquitin-conjugating enzyme]-L-cysteine + N(6)-ubiquitinyl-[acceptor protein]-L-lysine.. Functionally, effector proteins function to alter host cell physiology and promote bacterial survival in host tissues. This protein is an E3 ubiquitin ligase that interferes with host's ubiquitination pathway. This Salmonella dublin (strain CT_02021853) protein is E3 ubiquitin-protein ligase SopA (sopA).